The primary structure comprises 92 residues: Elongation factor 1-beta (92 aa).

It belongs to the EF-1-beta/EF-1-delta family.

Promotes the exchange of GDP for GTP in EF-1-alpha/GDP, thus allowing the regeneration of EF-1-alpha/GTP that could then be used to form the ternary complex EF-1-alpha/GTP/AAtRNA. In Korarchaeum cryptofilum (strain OPF8), this protein is Elongation factor 1-beta.